The sequence spans 549 residues: Glutamyl-tRNA(Gln) amidotransferase subunit B, chloroplastic/mitochondrial (549 aa).

Belongs to the GatB/GatE family. GatB subfamily. As to quaternary structure, subunit of the heterotrimeric GatCAB amidotransferase (AdT) complex, composed of A, B and C subunits.

It is found in the mitochondrion. Its subcellular location is the plastid. The protein localises to the chloroplast. It carries out the reaction L-glutamyl-tRNA(Gln) + L-glutamine + ATP + H2O = L-glutaminyl-tRNA(Gln) + L-glutamate + ADP + phosphate + H(+). Allows the formation of correctly charged Gln-tRNA(Gln) through the transamidation of misacylated Glu-tRNA(Gln) in chloroplasts and mitochondria. The reaction takes place in the presence of glutamine and ATP through an activated gamma-phospho-Glu-tRNA(Gln). This is Glutamyl-tRNA(Gln) amidotransferase subunit B, chloroplastic/mitochondrial from Ricinus communis (Castor bean).